Consider the following 219-residue polypeptide: MSLLVKICGLTTPETLGAALDAGAEMVGFVFFPPSPRHVGLTAARELGQQAKGRALKVALTVDADDATFENIVETLRPDLLQLHGRESVARIRDLKQRFGLPVMKAIAVATTADLVPLAGYADVCDRILFDARAPKDATRPGGLGATFDWHVLDALALDRPFMVSGGLSADNVAEAVRITRAGGVDVSSGVERAPGVKDCDMIRNFIRAARAAEELSVQ.

Belongs to the TrpF family.

The catalysed reaction is N-(5-phospho-beta-D-ribosyl)anthranilate = 1-(2-carboxyphenylamino)-1-deoxy-D-ribulose 5-phosphate. It participates in amino-acid biosynthesis; L-tryptophan biosynthesis; L-tryptophan from chorismate: step 3/5. The polypeptide is N-(5'-phosphoribosyl)anthranilate isomerase (Bradyrhizobium sp. (strain BTAi1 / ATCC BAA-1182)).